The primary structure comprises 1021 residues: MEGGRSWSIESYLNEYFDIPAKNPPGEARRRWRRAVGLIVRNRRRRFGRFSDVDAIDEAQRRKILVRVKQYHLPPELIEEGFCISPDELAAIANMREDYTMLRMHGGINGISRKIKASLEDGAKETDIATRQMLYGANRHAEKPPRSFWMFVWDALHDLTLIILVVCALVSIVVGLATKGWPMGIYDGFGIILSILLVVLVTATSDYQQARKFMELDREKQKIYIRVTRDKKTKEVLVHDLVVGDILHLSIGDVVPADGLFISGDCLMIDESSLSGESEPVNISEERPFLHAGNKVVDGAAKMLVTAVGTRTEWGKIMGTLNGDGVDETPLQVKLNGVATIIGQIGLVFAVLTFLVLLARFLADKGMHVGLLNWSANDALTIVNYFAIAVTIIVVAVPEGLPLAVTLSLAFAMKKLMHDKALVRHLAACETMGSASCICTDKTGTLTTNHMIVDKVWIGDVKFVGDKKNSELKSTISERVMAILIQGIFVNTASEVVKGDDGKNTILGLATETALLEFGLSLEEHLYDDYNKLTRIKVDPFNSVKKKMSVTIQLPNGGIRTFCKGASEIILEQCNTIHNTDGNIVPLSEMQKHNVLNIINSFASEALRTLCIAFKDMDEFPNDQPISDDGYTLIAVFGIKDPVRPGVKDAVRTCMAAGIRVRMVTGDNINTAKAIAKECGILTEDGIAIEGQQLNNKSSDELKELLPKIQVIARSLPMDKYKLVTSLKSMYQEVVAVTGDGTNDAPALHESDIGLAMGITGTEVAKESADVIIMDDNFETIVNVARWGRAVYLNIQKFVQFQLTVNIVALIVNFVSACIIGSAPLTAVQLLWVNMIMDTLGALALATEPPNDEMMKRPPVRRGDNFITRIMWRNILGQGLYQLLVLATLMVIGKKLLSIEGPQSDKTINTLIFNSFVFCQVFNEINCREMEKINVLQGIFRNWIFVGILTATVIFQVIIVEFLGTFANTVPLSGELWLLSVVIGSISMIISVILKCIPVEFNKTNTKPHGYELIPEGPEIL.

The Cytoplasmic portion of the chain corresponds to 1-155 (MEGGRSWSIE…RSFWMFVWDA (155 aa)). 2 consecutive transmembrane segments (helical) span residues 156–176 (LHDL…VVGL) and 181–201 (WPMG…VVLV). Topologically, residues 202–241 (TATSDYQQARKFMELDREKQKIYIRVTRDKKTKEVLVHDL) are cytoplasmic. 2 consecutive transmembrane segments (helical) span residues 242 to 262 (VVGD…GLFI) and 338 to 358 (VATI…LVLL). At 359–384 (ARFLADKGMHVGLLNWSANDALTIVN) the chain is on the cytoplasmic side. Residues 385–405 (YFAIAVTIIVVAVPEGLPLAV) traverse the membrane as a helical segment. Asp-441 acts as the 4-aspartylphosphate intermediate in catalysis. The Mg(2+) site is built by Asp-740 and Asp-744. The chain crosses the membrane as a helical span at residues 807–827 (IVALIVNFVSACIIGSAPLTA). Residues 828-829 (VQ) are Cytoplasmic-facing. A run of 2 helical transmembrane segments spans residues 830-850 (LLWV…TEPP) and 879-899 (GLYQ…LLSI). At 900–942 (EGPQSDKTINTLIFNSFVFCQVFNEINCREMEKINVLQGIFRN) the chain is on the cytoplasmic side. 2 helical membrane-spanning segments follow: residues 943 to 963 (WIFV…VEFL) and 974 to 994 (GELW…SVIL). Residues 995 to 1021 (KCIPVEFNKTNTKPHGYELIPEGPEIL) are Cytoplasmic-facing.

Belongs to the cation transport ATPase (P-type) (TC 3.A.3) family. Type IIB subfamily.

Its subcellular location is the membrane. The enzyme catalyses Ca(2+)(in) + ATP + H2O = Ca(2+)(out) + ADP + phosphate + H(+). Activated by calmodulin. In terms of biological role, this magnesium-dependent enzyme catalyzes the hydrolysis of ATP coupled with the translocation of calcium from the cytosol out of the cell, into the endoplasmic reticulum, or into organelles. This Oryza sativa subsp. japonica (Rice) protein is Probable calcium-transporting ATPase 6, plasma membrane-type.